We begin with the raw amino-acid sequence, 375 residues long: Succinyl-diaminopimelate desuccinylase (375 aa).

A Zn(2+)-binding site is contributed by His66. Residue Asp68 is part of the active site. Position 99 (Asp99) interacts with Zn(2+). The active-site Proton acceptor is the Glu133. Zn(2+)-binding residues include Glu134, Glu162, and His348.

This sequence belongs to the peptidase M20A family. DapE subfamily. As to quaternary structure, homodimer. Requires Zn(2+) as cofactor. It depends on Co(2+) as a cofactor.

It carries out the reaction N-succinyl-(2S,6S)-2,6-diaminopimelate + H2O = (2S,6S)-2,6-diaminopimelate + succinate. Its pathway is amino-acid biosynthesis; L-lysine biosynthesis via DAP pathway; LL-2,6-diaminopimelate from (S)-tetrahydrodipicolinate (succinylase route): step 3/3. Its function is as follows. Catalyzes the hydrolysis of N-succinyl-L,L-diaminopimelic acid (SDAP), forming succinate and LL-2,6-diaminopimelate (DAP), an intermediate involved in the bacterial biosynthesis of lysine and meso-diaminopimelic acid, an essential component of bacterial cell walls. The chain is Succinyl-diaminopimelate desuccinylase from Enterobacter sp. (strain 638).